Consider the following 242-residue polypeptide: Probable 2-phosphosulfolactate phosphatase (242 aa).

Belongs to the ComB family. Mg(2+) serves as cofactor.

It catalyses the reaction (2R)-O-phospho-3-sulfolactate + H2O = (2R)-3-sulfolactate + phosphate. This Synechococcus sp. (strain JA-3-3Ab) (Cyanobacteria bacterium Yellowstone A-Prime) protein is Probable 2-phosphosulfolactate phosphatase.